The primary structure comprises 143 residues: Ribosome maturation factor RimP (143 aa).

It belongs to the RimP family.

It localises to the cytoplasm. Its function is as follows. Required for maturation of 30S ribosomal subunits. This chain is Ribosome maturation factor RimP, found in Borrelia recurrentis (strain A1).